Consider the following 509-residue polypeptide: Heat shock 70 kDa protein 14 (509 aa).

The protein belongs to the heat shock protein 70 family. In terms of assembly, component of ribosome-associated complex (RAC), a heterodimer composed of Hsp70/DnaK-type chaperone HSPA14 and Hsp40/DnaJ-type chaperone DNAJC2.

Its subcellular location is the cytoplasm. It is found in the cytosol. In terms of biological role, component of the ribosome-associated complex (RAC), a complex involved in folding or maintaining nascent polypeptides in a folding-competent state. In the RAC complex, binds to the nascent polypeptide chain, while DNAJC2 stimulates its ATPase activity. This chain is Heat shock 70 kDa protein 14 (Hspa14), found in Rattus norvegicus (Rat).